A 120-amino-acid polypeptide reads, in one-letter code: MFALPGYDAFLGFLLISAAVPILALVTNKLLAPRSRTGERELTYESGMEPIGGAWIQFNIRYYMFALVFVIFDVETVFLYPWAVAFHRLGLLAFIEALIFIAILLVALAYAWRKGALEWS.

Helical transmembrane passes span 6-26 (GYDA…LALV), 64-84 (MFAL…PWAV), and 89-109 (LGLL…VALA).

The protein belongs to the complex I subunit 3 family. NDH-1 can be composed of about 15 different subunits; different subcomplexes with different compositions have been identified which probably have different functions.

The protein resides in the cellular thylakoid membrane. It catalyses the reaction a plastoquinone + NADH + (n+1) H(+)(in) = a plastoquinol + NAD(+) + n H(+)(out). The enzyme catalyses a plastoquinone + NADPH + (n+1) H(+)(in) = a plastoquinol + NADP(+) + n H(+)(out). In terms of biological role, NDH-1 shuttles electrons from an unknown electron donor, via FMN and iron-sulfur (Fe-S) centers, to quinones in the respiratory and/or the photosynthetic chain. The immediate electron acceptor for the enzyme in this species is believed to be plastoquinone. Couples the redox reaction to proton translocation, and thus conserves the redox energy in a proton gradient. Cyanobacterial NDH-1 also plays a role in inorganic carbon-concentration. The sequence is that of NAD(P)H-quinone oxidoreductase subunit 3 from Prochlorococcus marinus (strain MIT 9313).